We begin with the raw amino-acid sequence, 2303 residues long: Genome polyprotein (2303 aa).

A zinc finger lies at 3–14; it reads CKHGYPDVCPIC. The tract at residues 30-46 is acidic; the sequence is DGEWYPTDLLCVDLDDD. Residues 60-73 form a theilo region; sequence MDWTDVPLIRDIVM. A disordered region spans residues 74 to 93; sequence EPQGNSSSSDKSNSQSSGNE. Residue Gly-77 is the site of N-myristoyl glycine; by host attachment. The span at 78-92 shows a compositional bias: low complexity; the sequence is NSSSSDKSNSQSSGN. A disulfide bridge links Cys-501 with Cys-503. The tract at residues 1041 to 1047 is host EIF4E binding; the sequence is YYRQRLI. The region spanning 1283 to 1448 is the SF3 helicase domain; that stretch reads IPLASLCEKF…CKTPAGMLDV (166 aa). Residue 1312-1319 coordinates ATP; that stretch reads GAAGQGKS. Tyr-1608 is subject to O-(5'-phospho-RNA)-tyrosine. The 194-residue stretch at 1636-1829 folds into the Peptidase C3 domain; it reads NPVMDFELFC…AATIITKELI (194 aa). Active-site for protease 3C activity residues include His-1680, Asp-1714, and Cys-1793. One can recognise a RdRp catalytic domain in the interval 2071–2189; it reads NYVYDVDYSN…GTNYQIDFNL (119 aa). Residues Asp-2077 and Asp-2175 each act as for RdRp activity in the active site.

The protein belongs to the picornaviruses polyprotein family. Interacts with host EIF4E. Interacts with the leader protein. In terms of assembly, interacts with host RAN; the complex L-RAN recruits cellular kinases responsible for the L-induced nucleocytoplasmic trafficking inhibition. The complex L-RAN can further bind to the host exportins XPO1/CRM1 and CSE1L/CAS. Interacts with the protein 2A. Interacts with host RNASEL; this interaction prevents RNASEL activation by its substrate 2'-5' oligoadenylates. Phosphorylated. In terms of processing, specific enzymatic cleavages by the viral protease in vivo yield a variety of precursors and mature proteins. The polyprotein seems to be cotranslationally cleaved at the 2A/2B junction by a ribosomal skip from one codon to the next without formation of a peptide bond. This process would release the P1-2A peptide from the translational complex. Post-translationally, during virion maturation, immature virions are rendered infectious following cleavage of VP0 into VP4 and VP2. This maturation seems to be an autocatalytic event triggered by the presence of RNA in the capsid and is followed by a conformational change of the particle. Uridylylated by the polymerase and is covalently linked to the 5'-end of genomic RNA. This uridylylated form acts as a nucleotide-peptide primer for the polymerase. In terms of processing, myristoylation is required during RNA encapsidation and formation of the mature virus particle.

The protein resides in the virion. It is found in the host cytoplasm. The protein localises to the host nucleus. Its subcellular location is the host nucleolus. It localises to the host cytoplasmic vesicle membrane. It carries out the reaction RNA(n) + a ribonucleoside 5'-triphosphate = RNA(n+1) + diphosphate. The catalysed reaction is ATP + H2O = ADP + phosphate + H(+). The enzyme catalyses Selective cleavage of Gln-|-Gly bond in the poliovirus polyprotein. In other picornavirus reactions Glu may be substituted for Gln, and Ser or Thr for Gly.. In terms of biological role, forms a complex with host RAN and probably binds to exportins carrying activated MAPK in order to mediate the hyperphosphorylation of host Phe/Gly containing nuclear pore proteins (Nups) resulting in cessation of active nucleocytoplasmic transport. Proteins with NLS signals fail to import, cellular mRNAs fail to export, and some proteins small enough for diffusion are not retained anymore (efflux). The resulting inhibition of cellular protein synthesis serves to ensure maximal viral gene expression and to evade host immune response. The leader protein also inhibits host interferon regulatory factor 3 (IRF3) dimerization, thereby blocking the transcriptional activation of IFN genes. Binds to host RNase L thereby preventing its activation by 2'-5' oligoadenylates in order to counteract the antiviral interferon-inducible OAS/RNase L pathway. Inhibits the integrated stress response (ISR) in the infected cell. Inhibits the host EIF2AK2/PKR by rendering this kinase unable to detect double-stranded RNA. Also impairs host stress granule formation probably by acting on a step downstream of EIF2AK2/PKR activation. Functionally, forms an icosahedral capsid of pseudo T=3 symmetry with capsid proteins VP2 and VP3. Together they form an icosahedral capsid composed of 60 copies of each VP1, VP2, and VP3, with a diameter of approximately 300 Angstroms. VP4 lies on the inner surface of the protein shell formed by VP1, VP2 and VP3. All the three latter proteins contain a beta-sheet structure called beta-barrel jelly roll. VP1 is situated at the 12 fivefold axes, whereas VP2 and VP3 are located at the quasi-sixfold axes. Lies on the inner surface of the capsid shell. After binding to the host receptor, the capsid undergoes conformational changes. Capsid protein VP4 is released, capsid protein VP1 N-terminus is externalized, and together, they shape a pore in the host membrane through which the viral genome is translocated into the host cell cytoplasm. After genome has been released, the channel shrinks. Its function is as follows. VP0 precursor is a component of immature procapsids. In terms of biological role, involved in host translation shutoff by inhibiting cap-dependent mRNA translation. Nuclear localization is required for this function. The resulting inhibition of cellular protein synthesis serves to ensure maximal viral gene expression and to evade host immune response. Inhibits the phosphorylation of the leader protein. Functionally, affects membrane integrity and causes an increase in membrane permeability. Associates with and induces structural rearrangements of intracellular membranes. It displays RNA-binding, nucleotide binding and NTPase activities. Its function is as follows. Serves as membrane anchor via its hydrophobic domain. In terms of biological role, forms a primer, VPg-pU, which is utilized by the polymerase for the initiation of RNA chains. Functionally, cysteine protease that generates mature viral proteins from the precursor polyprotein. In addition to its proteolytic activity, it binds to viral RNA, and thus influences viral genome replication. RNA and substrate cooperatively bind to the protease. Cleaves host PABP1, this cleavage is important for viral replication. Replicates the genomic and antigenomic RNAs by recognizing replications specific signals. Performs VPg uridylylation. The sequence is that of Genome polyprotein from Mus musculus (Mouse).